The primary structure comprises 1418 residues: Ankyrin repeat and fibronectin type-III domain-containing protein 1 (1418 aa).

The disordered stretch occupies residues 119-236; it reads RDSVCSLPPP…DRGETPSLSE (118 aa). Over residues 144–154 the composition is skewed to polar residues; it reads PENTSINLSQC. A compositionally biased stretch (low complexity) spans 171–186; the sequence is SASPTSSTPLRTTSTP. Residues 223–236 are compositionally biased toward basic and acidic residues; sequence LRDHDRGETPSLSE. ANK repeat units follow at residues 419–450 and 456–485; these read QSSE…ELDL and EGLT…KESP. In terms of domain architecture, Fibronectin type-III spans 556 to 652; the sequence is APLMVRLSVT…LSQPPSAVPS (97 aa). Positions 893-900 are highly conserved peptide sequence; sequence GLYLGYLK. Disordered stretches follow at residues 1134–1179, 1321–1343, and 1361–1418; these read VQKN…EVFL, LETP…YRQP, and KTSP…SSTL. Positions 1136 to 1146 are enriched in polar residues; it reads KNDSTSSNTDY. Over residues 1407-1418 the composition is skewed to polar residues; sequence NEQVSEILSSTL.

In terms of biological role, required for vestibular-related functions. This Danio rerio (Zebrafish) protein is Ankyrin repeat and fibronectin type-III domain-containing protein 1 (ankfn1).